Consider the following 328-residue polypeptide: Opticin (328 aa).

The signal sequence occupies residues 1–19 (MKFLAFLSLLSLVLQKAET). A glycan (N-linked (GlcNAc...) asparagine) is linked at N46. Y69 bears the Sulfotyrosine mark. N80 and N101 each carry an N-linked (GlcNAc...) asparagine glycan. The 38-residue stretch at 112-149 (LLNSQSSHGLPTCLVCVCLGSSVYCDDADLENIPPLPQ) folds into the LRRNT domain. LRR repeat units lie at residues 150–171 (MTTYLYARFNHISHIQAGDFKG), 174–195 (KLRRIDLSGNSISSIHNDALRL), 198–219 (ALQDLILPENQLAALPVLPSGI), 244–265 (KLQFLYLANNMLDSIPGPLPLS), 266–286 (LRSLHLQNNMIETMESDTFCD), and 296–316 (QLEDIRLDGNPINLSLFPEAY). An intrachain disulfide couples C285 to C318. N308 carries N-linked (GlcNAc...) asparagine glycosylation.

This sequence belongs to the small leucine-rich proteoglycan (SLRP) family. SLRP class III subfamily. As to quaternary structure, homodimer. O-glycosylated. Post-translationally, sulfated on tyrosine residues. In terms of processing, proteolytically cleaved by MMP1, MMP2, MMP3, MMP7, MMP8, MMP9, ADAMTS4, and ADAMTS5. Proteolytically cleaved by MMP13. Expressed in cartilage (at protein level). Expressed in the vitreous collagen, inner limiting membrane, lens capsule, trabecular meshwork, anterior surface of the iris, the area adjacent to the nonpigmented ciliary epithelium, and weakly expressed in the retina of the eye (at protein level). Expressed in the nonpigmented ciliary epithelium of the eye.

It is found in the secreted. The protein resides in the extracellular space. It localises to the extracellular matrix. Inhibits angiogenesis in the vitreous humor of the eye, and therefore represses neovascularization. Binds collagen fibrils. May be involved in collagen fiber organization via regulation of other members of the small leucine-rich repeat proteoglycan superfamily. This is Opticin (Optc) from Mus musculus (Mouse).